The following is an 865-amino-acid chain: MSDVSTSVQSKFARLAKKKENITYMKREQLTETDKDIAPVLDLKCKDVSAIMNKFKVLMEIQDLMFEEMRETLKNDLKAVLGGKATIPEVKNSENSSSRTEFQQIINLALQKTGMVGKIEGENSKIGDDNENLTFKLEVNELSGKLDNTNEYNSNDGKKLPQGESRSYEVMGSMEETLCNIDDRDGNRNVHLEFTERESRKDGEDEFVKEMREERKFQKLKNKEEVLKASREEKVLMDEGAVLTLVADLSSATLDISKQWSNVFNILRENDFEPKFLCEVKLAFKCDGEIKTFSDLQSLRKFASQKSSVKELLKDVLPQKEEINQGGRKYGIQEKRDKTLIDSKHRAGEITSDGLSFLFLKEVKVAKPEEMKNLETQEEEFSELEELDEEASGMEDDEDTSGLEEEEEEPSGLEEEEEEEASGLEEDEASGLEEEEEQTSEQDSTFQGHTLVDAKHEVEITSDGMETTFIDSVEDSESEEEEEGKSSETGKVKTTSLTEKKASRRQKEIPFSYLVGDSGKKKLVKHQVVHKTQEEEETAVPTSQGTGTPCLTLCLASPSKSLEMSHDEHKKHSHTNLSISTGVTKLKKTEEKKHRTLHTEELTSKEADLTEETEENLRSSVINSIREIKEEIGNLKSSHSGVLEIENSVDDLSSRMDILEERIDSLEDQIEEFSKDTMQMTKQIISKERQRDIEERSRSCNIRLIGIPEKESYENRAEDIIKEIIDENFAELKKGSSLEIVSACRVPSKIDEKRLTPRHILVKFWNSSDKEKIIRASRERREITYQGTRIRLTADLSLDTLDARSKWSNVFKVLLEKGFNPRILYPAKMAFDFRGKTKVFLSIEEFRDYVLHMPTLRELLGNNIP.

S2 carries the post-translational modification N-acetylserine. At S2 the chain carries Phosphoserine. T149 is modified (phosphothreonine). S154 is modified (phosphoserine). Residues 370–508 form a disordered region; that stretch reads EMKNLETQEE…EKKASRRQKE (139 aa). Composition is skewed to acidic residues over residues 376 to 440 and 472 to 483; these read TQEE…EQTS and SVEDSESEEEEE. Phosphoserine occurs at positions 472, 476, and 478. The span at 498-508 shows a compositional bias: basic and acidic residues; that stretch reads TEKKASRRQKE. 3 positions are modified to phosphoserine: S518, S561, and S573. The span at 590–608 shows a compositional bias: basic and acidic residues; that stretch reads EEKKHRTLHTEELTSKEAD. The tract at residues 590-612 is disordered; it reads EEKKHRTLHTEELTSKEADLTEE. Residues S640, S648, and S665 each carry the phosphoserine modification. A coiled-coil region spans residues 642-684; that stretch reads VLEIENSVDDLSSRMDILEERIDSLEDQIEEFSKDTMQMTKQI.

Belongs to the transposase 22 family.

The sequence is that of LINE-1 type transposase domain-containing protein 1 (L1TD1) from Homo sapiens (Human).